A 195-amino-acid polypeptide reads, in one-letter code: Porimin (195 aa).

The signal sequence occupies residues 1 to 23 (MALCARAALLLGVLQVLALLGAA). The Extracellular segment spans residues 24-152 (QDPTDAQGSA…PTKGKGSKFD (129 aa)). N-linked (GlcNAc...) asparagine glycans are attached at residues asparagine 36, asparagine 45, asparagine 51, asparagine 59, asparagine 109, and asparagine 115. Positions 99-127 (VTPTASKSTPNASASPNSTHTSASMTTPA) are disordered. Polar residues predominate over residues 101-126 (PTASKSTPNASASPNSTHTSASMTTP). Residues 153 to 173 (AGSFVGGIVLTLGVLSILYIG) traverse the membrane as a helical segment. Topologically, residues 174–195 (CKMYYSRRGIRYRSIDEHDAII) are cytoplasmic. Serine 187 is modified (phosphoserine).

The protein belongs to the CD164 family.

Its subcellular location is the membrane. Functionally, implicated in oncotic cell death, characterized by cell swelling, organelle swelling, vacuolization and increased membrane permeability. The chain is Porimin (Tmem123) from Mus musculus (Mouse).